A 340-amino-acid chain; its full sequence is Delta-aminolevulinic acid dehydratase (340 aa).

Zn(2+) is bound by residues cysteine 134, cysteine 136, and cysteine 144. The active-site Schiff-base intermediate with substrate is lysine 211. 5-aminolevulinate contacts are provided by arginine 221 and arginine 233. Lysine 264 (schiff-base intermediate with substrate) is an active-site residue. The 5-aminolevulinate site is built by serine 291 and tyrosine 330.

The protein belongs to the ALAD family. As to quaternary structure, homooctamer. It depends on Zn(2+) as a cofactor.

The catalysed reaction is 2 5-aminolevulinate = porphobilinogen + 2 H2O + H(+). The protein operates within porphyrin-containing compound metabolism; protoporphyrin-IX biosynthesis; coproporphyrinogen-III from 5-aminolevulinate: step 1/4. Its function is as follows. Catalyzes an early step in the biosynthesis of tetrapyrroles. Binds two molecules of 5-aminolevulinate per subunit, each at a distinct site, and catalyzes their condensation to form porphobilinogen. The protein is Delta-aminolevulinic acid dehydratase (HEM2) of Eremothecium gossypii (strain ATCC 10895 / CBS 109.51 / FGSC 9923 / NRRL Y-1056) (Yeast).